We begin with the raw amino-acid sequence, 202 residues long: Adenylyl-sulfate kinase (202 aa).

35 to 42 is an ATP binding site; sequence GLSGSGKS. The Phosphoserine intermediate role is filled by S109.

It belongs to the APS kinase family.

The catalysed reaction is adenosine 5'-phosphosulfate + ATP = 3'-phosphoadenylyl sulfate + ADP + H(+). Its pathway is sulfur metabolism; hydrogen sulfide biosynthesis; sulfite from sulfate: step 2/3. Its function is as follows. Catalyzes the synthesis of activated sulfate. This chain is Adenylyl-sulfate kinase, found in Bacteroides fragilis (strain ATCC 25285 / DSM 2151 / CCUG 4856 / JCM 11019 / LMG 10263 / NCTC 9343 / Onslow / VPI 2553 / EN-2).